The sequence spans 84 residues: Small ribosomal subunit protein bS20 (84 aa).

It belongs to the bacterial ribosomal protein bS20 family.

Its function is as follows. Binds directly to 16S ribosomal RNA. This Bacteroides thetaiotaomicron (strain ATCC 29148 / DSM 2079 / JCM 5827 / CCUG 10774 / NCTC 10582 / VPI-5482 / E50) protein is Small ribosomal subunit protein bS20.